The chain runs to 305 residues: Spore coat protein CotA (305 aa).

The protein localises to the spore coat. Its subcellular location is the spore. It localises to the perispore. In terms of biological role, contributes to maintain proper thickness of the spore coat. May contribute to the formation of polar appendages. May play an important role in assembly of the outer layers of the spore coat. The chain is Spore coat protein CotA from Clostridioides difficile (strain 630) (Peptoclostridium difficile).